Reading from the N-terminus, the 332-residue chain is Probable isoaspartyl peptidase/L-asparaginase CG7860 (332 aa).

Threonine 188 acts as the Nucleophile in catalysis. Residues 216–219 (RIGD) and 239–242 (TGHG) contribute to the substrate site.

Belongs to the Ntn-hydrolase family. Heterodimer of an alpha and beta chain produced by autocleavage. Cleaved into an alpha and beta chain by autocatalysis; this activates the enzyme. The N-terminal residue of the beta subunit is responsible for the nucleophile hydrolase activity.

It catalyses the reaction L-asparagine + H2O = L-aspartate + NH4(+). It carries out the reaction Cleavage of a beta-linked Asp residue from the N-terminus of a polypeptide.. Its function is as follows. Has both L-asparaginase and beta-aspartyl peptidase activity. Does not have aspartylglucosaminidase activity and is inactive toward GlcNAc-L-Asn. Likewise, has no activity toward glutamine. This chain is Probable isoaspartyl peptidase/L-asparaginase CG7860, found in Drosophila melanogaster (Fruit fly).